We begin with the raw amino-acid sequence, 202 residues long: 3-isopropylmalate dehydratase small subunit (202 aa).

Belongs to the LeuD family. LeuD type 1 subfamily. As to quaternary structure, heterodimer of LeuC and LeuD.

It carries out the reaction (2R,3S)-3-isopropylmalate = (2S)-2-isopropylmalate. It participates in amino-acid biosynthesis; L-leucine biosynthesis; L-leucine from 3-methyl-2-oxobutanoate: step 2/4. Its function is as follows. Catalyzes the isomerization between 2-isopropylmalate and 3-isopropylmalate, via the formation of 2-isopropylmaleate. This Buchnera aphidicola subsp. Pemphigus spyrothecae protein is 3-isopropylmalate dehydratase small subunit.